The primary structure comprises 109 residues: MAGALVRKAADYVRSKDFRDYLMSTHFWGPVANWGLPIAAINDMKKSPEIISGRMTFALCCYSLTFMRFAYKVQPRNWLLFACHATNEVAQLIQGGRLIKHEMTKTASA.

Alanine 2 carries the post-translational modification N-acetylalanine. Residues 2–20 (AGALVRKAADYVRSKDFRD) lie on the Mitochondrial matrix side of the membrane. A helical membrane pass occupies residues 21–41 (YLMSTHFWGPVANWGLPIAAI). Residues 42-52 (NDMKKSPEIIS) are Mitochondrial intermembrane-facing. The helical transmembrane segment at 53–71 (GRMTFALCCYSLTFMRFAY) threads the bilayer. Lysine 72 carries the post-translational modification N6-acetyllysine. Topologically, residues 72-109 (KVQPRNWLLFACHATNEVAQLIQGGRLIKHEMTKTASA) are mitochondrial matrix.

It belongs to the mitochondrial pyruvate carrier (MPC) (TC 2.A.105) family. Homodimer. Forms heterodimer with MPC2. The heterodimer is the more stable and dominant form.

It localises to the mitochondrion inner membrane. The catalysed reaction is pyruvate(out) + H(+)(out) = pyruvate(in) + H(+)(in). In terms of biological role, mediates the uptake of pyruvate into mitochondria. In Homo sapiens (Human), this protein is Mitochondrial pyruvate carrier 1 (MPC1).